The chain runs to 419 residues: Putative zinc metalloprotease spyM18_2031 (419 aa).

His-18 lines the Zn(2+) pocket. The active site involves Glu-19. His-22 is a Zn(2+) binding site. Helical transmembrane passes span 169-191, 301-323, 343-365, and 392-411; these read LITN…ILLV, LAWS…FSLN, LESV…LIPI, and AYIT…AVTW. One can recognise a PDZ domain in the interval 175-274; the sequence is GPMNNFILGI…LKTVAVKPQK (100 aa).

The protein belongs to the peptidase M50B family. It depends on Zn(2+) as a cofactor.

The protein resides in the cell membrane. The protein is Putative zinc metalloprotease spyM18_2031 of Streptococcus pyogenes serotype M18 (strain MGAS8232).